The sequence spans 448 residues: Selenide, water dikinase 2 (448 aa).

Alanine 2 bears the N-acetylalanine mark. The residue at position 46 (serine 46) is a Phosphoserine. The active site involves selenocysteine 60. Position 60 (selenocysteine 60) is a non-standard amino acid, selenocysteine. Lysine 63 is an ATP binding site. Positions 85-107 are disordered; that stretch reads LGRGLVGGQEEASQEAGLPAGAG. A Phosphoserine modification is found at serine 97. ATP contacts are provided by residues 118-120, aspartate 138, aspartate 161, and 212-215; these read GMD and GGQT. Aspartate 120 contributes to the Mg(2+) binding site. Residue aspartate 161 coordinates Mg(2+). Position 316 (aspartate 316) interacts with Mg(2+).

The protein belongs to the selenophosphate synthase 1 family. Class I subfamily. In terms of assembly, homodimer. Mg(2+) serves as cofactor. In terms of processing, truncated SEPHS2 proteins produced by failed UGA/Sec decoding are ubiquitinated by the CRL2(KLHDC3) complex, which recognizes the glycine (Gly) at the C-terminus of truncated SEPHS2 proteins.

It carries out the reaction hydrogenselenide + ATP + H2O = selenophosphate + AMP + phosphate + 2 H(+). Functionally, synthesizes selenophosphate from selenide and ATP. This Homo sapiens (Human) protein is Selenide, water dikinase 2 (SEPHS2).